The primary structure comprises 530 residues: Chaperonin GroEL (530 aa).

Residues 30–33 (TLGP), Lys-51, 87–91 (DGTTT), Gly-415, and Asp-495 contribute to the ATP site.

The protein belongs to the chaperonin (HSP60) family. As to quaternary structure, forms a cylinder of 14 subunits composed of two heptameric rings stacked back-to-back. Interacts with the co-chaperonin GroES.

Its subcellular location is the cytoplasm. The catalysed reaction is ATP + H2O + a folded polypeptide = ADP + phosphate + an unfolded polypeptide.. In terms of biological role, together with its co-chaperonin GroES, plays an essential role in assisting protein folding. The GroEL-GroES system forms a nano-cage that allows encapsulation of the non-native substrate proteins and provides a physical environment optimized to promote and accelerate protein folding. In Carsonella ruddii (strain PV), this protein is Chaperonin GroEL.